A 224-amino-acid chain; its full sequence is 7-cyano-7-deazaguanine synthase (224 aa).

9-19 (ISGGMDSTLCA) is an ATP binding site. Zn(2+) is bound by residues Cys-190, Cys-198, Cys-201, and Cys-204.

It belongs to the QueC family. Zn(2+) serves as cofactor.

It carries out the reaction 7-carboxy-7-deazaguanine + NH4(+) + ATP = 7-cyano-7-deazaguanine + ADP + phosphate + H2O + H(+). It participates in purine metabolism; 7-cyano-7-deazaguanine biosynthesis. Functionally, catalyzes the ATP-dependent conversion of 7-carboxy-7-deazaguanine (CDG) to 7-cyano-7-deazaguanine (preQ(0)). This Campylobacter jejuni (strain RM1221) protein is 7-cyano-7-deazaguanine synthase.